The following is a 558-amino-acid chain: Formate--tetrahydrofolate ligase (558 aa).

Residue 66 to 73 (TPAGEGKT) participates in ATP binding.

The protein belongs to the formate--tetrahydrofolate ligase family.

It catalyses the reaction (6S)-5,6,7,8-tetrahydrofolate + formate + ATP = (6R)-10-formyltetrahydrofolate + ADP + phosphate. It functions in the pathway one-carbon metabolism; tetrahydrofolate interconversion. The polypeptide is Formate--tetrahydrofolate ligase (Neisseria gonorrhoeae (strain NCCP11945)).